Reading from the N-terminus, the 175-residue chain is Ribosome maturation factor RimM (175 aa).

The region spanning 96–175 (EDEFYWRELF…RIEVDWDPGF (80 aa)) is the PRC barrel domain.

Belongs to the RimM family. In terms of assembly, binds ribosomal protein uS19.

Its subcellular location is the cytoplasm. In terms of biological role, an accessory protein needed during the final step in the assembly of 30S ribosomal subunit, possibly for assembly of the head region. Essential for efficient processing of 16S rRNA. May be needed both before and after RbfA during the maturation of 16S rRNA. It has affinity for free ribosomal 30S subunits but not for 70S ribosomes. The chain is Ribosome maturation factor RimM from Aliivibrio fischeri (strain ATCC 700601 / ES114) (Vibrio fischeri).